Reading from the N-terminus, the 466-residue chain is Muscarinic acetylcholine receptor M2 (466 aa).

Residues 1–22 (MNNSTNSSNNGLAITSPYKTFE) lie on the Extracellular side of the membrane. 3 N-linked (GlcNAc...) asparagine glycosylation sites follow: asparagine 2, asparagine 3, and asparagine 6. The helical transmembrane segment at 23-45 (VVFIVLVAGSLSLVTIIGNILVM) threads the bilayer. Residues 46–59 (VSIKVNRHLQTVNN) lie on the Cytoplasmic side of the membrane. Residues 60–80 (YFLFSLACADLIIGVFSMNLY) form a helical membrane-spanning segment. At 81–97 (TLYTVIGYWPLGPVVCD) the chain is on the extracellular side. Cysteine 96 and cysteine 176 form a disulfide bridge. The chain crosses the membrane as a helical span at residues 98–119 (LWLALDYVVSNASVMNLLIISF). Residues 120–122 (DRY) carry the Important for signaling motif. Residues 120–139 (DRYFCVTKPLTYPVKRTTKM) are Cytoplasmic-facing. A helical membrane pass occupies residues 140-162 (AGMMIAAAWVLSFILWAPAILFW). Residues 163-184 (QFIVGVRTVEDGECYIQFFSNA) lie on the Extracellular side of the membrane. Residues 185–209 (AVTFGTAIAAFYLPVIIMTVLYWHI) traverse the membrane as a helical segment. Topologically, residues 210-387 (SRASKSRIKK…PPSREKKVTR (178 aa)) are cytoplasmic. A disordered region spans residues 218–320 (KKEKKEPVAN…SLGHSKDDNS (103 aa)). Serine 232 is modified (phosphoserine). Residues 254 to 270 (GLEHNKIQNGKAPRDGG) are compositionally biased toward basic and acidic residues. 2 stretches are compositionally biased toward polar residues: residues 284–293 (NDSTSVSAVA) and 304–313 (DENTVSTSLG). Residues 388 to 410 (TILAILLAFIITWAPYNVMVLIN) traverse the membrane as a helical segment. Over 411 to 418 (TFCAPCIP) the chain is Extracellular. An intrachain disulfide couples cysteine 413 to cysteine 416. A helical transmembrane segment spans residues 419–442 (NTVWTIGYWLCYINSTINPACYAL). The Important for signaling signature appears at 436-440 (NPACY). At 443 to 466 (CNATFKKTFKHLLMCHYKNIGATR) the chain is on the cytoplasmic side. 3 positions are modified to phosphothreonine: threonine 446, threonine 450, and threonine 465.

This sequence belongs to the G-protein coupled receptor 1 family. Muscarinic acetylcholine receptor subfamily. CHRM2 sub-subfamily. As to quaternary structure, interacts with ARRB1 and ARRB2. Interacts with RACK1; the interaction regulates CHRM2 internalization. Phosphorylated in response to agonist treatment.

The protein resides in the cell membrane. Its subcellular location is the postsynaptic cell membrane. In terms of biological role, the muscarinic acetylcholine receptor mediates various cellular responses, including inhibition of adenylate cyclase, breakdown of phosphoinositides and modulation of potassium channels through the action of G proteins. Primary transducing effect is adenylate cyclase inhibition. Signaling promotes phospholipase C activity, leading to the release of inositol trisphosphate (IP3); this then triggers calcium ion release into the cytosol. The protein is Muscarinic acetylcholine receptor M2 (Chrm2) of Mus musculus (Mouse).